The chain runs to 506 residues: MPNEIFTINLNAQAIIPEAFILLGIVGTLLVDLAGEKTASKWAPIICYLSIGSSLVSLALQWSNPVENAFLGSFNSDNLAIAFRAIISLSTLISLLISWRYTEQSGSPIGEFAAIVLSATLGAMLLCGSTDLISVFISLETLSVASYLLSGYLKRDPRSSEAALKYLLVGSAAAAVYLYGSSFLYGLSGSTNLATIGLEIINKPSFITSLALVFVLSTVAFKIAAVPFHQWTPDVYEGSPTPVVAFLSVGSKTAGFAFAIRILSTTFSSFDEEWKLLFTILAILSMALGNVVALAQTSMKRMLAYSSIGQAGFVMIGIVSGTQDGLSAAVLYLAAYLFMNLGAFSCVILFSLRTGSDRILDYSGLYQKDPLITLGLSLCLLSLGGLPPMLGFFGKIYLFFAGWANHQYLLVIVGLVTSVISIYYYISVIKMMVVKEPQEASEIVKSYPEINWGIEGLPPLRIALYTCVAVTALGGILSNPLFKLANTAVSETPFLQDIIAIANNIS.

The next 13 helical transmembrane spans lie at 14-34 (AIIP…VDLA), 42-62 (WAPI…ALQW), 79-99 (LAIA…LISW), 108-128 (PIGE…LLCG), 132-152 (LISV…LSGY), 167-187 (LLVG…LYGL), 206-226 (FITS…IAAV), 240-260 (PTPV…AFAI), 276-296 (LLFT…ALAQ), 302-322 (MLAY…VSGT), 330-350 (VLYL…VILF), 374-394 (LGLS…GFFG), and 409-429 (LLVI…ISVI).

The protein belongs to the complex I subunit 2 family. As to quaternary structure, NDH-1 can be composed of about 15 different subunits; different subcomplexes with different compositions have been identified which probably have different functions.

The protein localises to the cellular thylakoid membrane. The enzyme catalyses a plastoquinone + NADH + (n+1) H(+)(in) = a plastoquinol + NAD(+) + n H(+)(out). The catalysed reaction is a plastoquinone + NADPH + (n+1) H(+)(in) = a plastoquinol + NADP(+) + n H(+)(out). NDH-1 shuttles electrons from an unknown electron donor, via FMN and iron-sulfur (Fe-S) centers, to quinones in the respiratory and/or the photosynthetic chain. The immediate electron acceptor for the enzyme in this species is believed to be plastoquinone. Couples the redox reaction to proton translocation, and thus conserves the redox energy in a proton gradient. Cyanobacterial NDH-1 also plays a role in inorganic carbon-concentration. The polypeptide is NAD(P)H-quinone oxidoreductase subunit 2 (Prochlorococcus marinus (strain AS9601)).